The sequence spans 154 residues: Ribonuclease H (154 aa).

One can recognise an RNase H type-1 domain in the interval 5–146; that stretch reads EQNIVYLYCD…ADELANRGID (142 aa). Residues D14, E52, D74, and D138 each contribute to the Mg(2+) site.

This sequence belongs to the RNase H family. In terms of assembly, monomer. It depends on Mg(2+) as a cofactor.

The protein localises to the cytoplasm. The enzyme catalyses Endonucleolytic cleavage to 5'-phosphomonoester.. In terms of biological role, endonuclease that specifically degrades the RNA of RNA-DNA hybrids. In Coxiella burnetii (strain CbuG_Q212) (Coxiella burnetii (strain Q212)), this protein is Ribonuclease H.